The following is a 321-amino-acid chain: Phospho-N-acetylmuramoyl-pentapeptide-transferase (321 aa).

The next 10 helical transmembrane spans lie at 4–24 (MVWA…WLIP), 51–71 (TMGG…TVGF), 75–95 (SGVL…DDYI), 109–129 (QKFT…VYGI), 139–159 (GFEV…LLIV), 173–193 (GLAA…ASAG), 195–215 (SDVT…FLFF), 222–242 (MFMG…LALL), 247–267 (LILP…ILQV), and 297–317 (VVYT…LLAM).

Belongs to the glycosyltransferase 4 family. MraY subfamily. Mg(2+) serves as cofactor.

It is found in the cell membrane. It carries out the reaction UDP-N-acetyl-alpha-D-muramoyl-L-alanyl-gamma-D-glutamyl-meso-2,6-diaminopimeloyl-D-alanyl-D-alanine + di-trans,octa-cis-undecaprenyl phosphate = di-trans,octa-cis-undecaprenyl diphospho-N-acetyl-alpha-D-muramoyl-L-alanyl-D-glutamyl-meso-2,6-diaminopimeloyl-D-alanyl-D-alanine + UMP. The protein operates within cell wall biogenesis; peptidoglycan biosynthesis. Its function is as follows. Catalyzes the initial step of the lipid cycle reactions in the biosynthesis of the cell wall peptidoglycan: transfers peptidoglycan precursor phospho-MurNAc-pentapeptide from UDP-MurNAc-pentapeptide onto the lipid carrier undecaprenyl phosphate, yielding undecaprenyl-pyrophosphoryl-MurNAc-pentapeptide, known as lipid I. The sequence is that of Phospho-N-acetylmuramoyl-pentapeptide-transferase from Heliobacterium modesticaldum (strain ATCC 51547 / Ice1).